The following is a 389-amino-acid chain: Flagellar P-ring protein (389 aa).

Positions 1–33 (MRPLVAARRRAAACCALAACMLALAFAPAAARA) are cleaved as a signal peptide.

It belongs to the FlgI family. The basal body constitutes a major portion of the flagellar organelle and consists of four rings (L,P,S, and M) mounted on a central rod.

Its subcellular location is the periplasm. It localises to the bacterial flagellum basal body. In terms of biological role, assembles around the rod to form the L-ring and probably protects the motor/basal body from shearing forces during rotation. The chain is Flagellar P-ring protein from Burkholderia mallei (strain ATCC 23344).